A 621-amino-acid chain; its full sequence is ATP-dependent lipid A-core flippase (621 aa).

A run of 5 helical transmembrane segments spans residues 32–52 (IVAALIAIFGVAATESYLAAF), 91–111 (VWGTENKIWTVPLFLIILVVI), 192–212 (IVLLYLNWQLSLIVVLMFPLL), 286–306 (SPFSELIASIALAVVIFIALW), and 312–332 (YTTIGEFMAFIVAMLQMYAPI). The 312-residue stretch at 33–344 (VAALIAIFGV…LANISIPMQT (312 aa)) folds into the ABC transmembrane type-1 domain. Residues 378-611 (FRNVDVEYRS…NGYYTMLRNI (234 aa)) form the ABC transporter domain. 410–417 (GRSGSGKS) serves as a coordination point for ATP.

The protein belongs to the ABC transporter superfamily. Lipid exporter (TC 3.A.1.106) family. As to quaternary structure, homodimer.

The protein resides in the cell inner membrane. The catalysed reaction is ATP + H2O + lipid A-core oligosaccharideSide 1 = ADP + phosphate + lipid A-core oligosaccharideSide 2.. Involved in lipopolysaccharide (LPS) biosynthesis. Translocates lipid A-core from the inner to the outer leaflet of the inner membrane. Transmembrane domains (TMD) form a pore in the inner membrane and the ATP-binding domain (NBD) is responsible for energy generation. The sequence is that of ATP-dependent lipid A-core flippase from Neisseria meningitidis serogroup B (strain ATCC BAA-335 / MC58).